The following is a 324-amino-acid chain: MFDENSNAAGTTPVASSLAATPNANLVSQVFNVKDSRWLQVEVCREFLRGQCARSDQECKFAHPPPNVDVQQGRVTACYDSIKGRCTRENPKCKYLHPPQHIKDQLLINGRNHLALKNLLSAQLNQTGTPMVNPMMALQQQAAAVNLIPNTPIYPPYYNGMMYPQVLQDPYTAAAVNQVLDSNQEYHSPPTDKKNQQLQTAALLGNVGGLLSAQSAAAFMANSSAAAAAAQQTPSPLLRLQRKRALEEENTNGNDMTSAAAAHTQLLSLAAGAVPMKRPTLDKNGAMLYSPVAQQAQQFNPYLLQTLQGYVPAVSCEYMQPPPF.

2 C3H1-type zinc fingers span residues tryptophan 38–proline 66 and glutamine 72–glutamine 100.

This sequence belongs to the muscleblind family. As to expression, expressed in neurons around the pharynx.

It is found in the nucleus. In terms of biological role, binds to RNA with repeat sequences 5'-CUG-3' and 5'-CCUG-3'. The polypeptide is Muscleblind-like protein (mbl-1) (Caenorhabditis elegans).